A 622-amino-acid polypeptide reads, in one-letter code: Low affinity potassium transport system protein Kup (622 aa).

Transmembrane regions (helical) follow at residues 9–29 (LPAITLAAIGVVYGDIGTSPL), 49–69 (VFGFLSLIFWLLIFVVSIKYL), 103–123 (VIMGLIGGSFFYGEVVITPAI), 137–157 (PQLDTWIVPLSIIVLTLLFMI), 165–185 (VGKLFAPIMLTWFLILAGLGL), 213–233 (VSFIALGAVVLSITGGEVLYA), 247–267 (WFTVVLPSLTLNYFGQGALLL), 276–296 (PFFLLAPDWALIPLLIIAALA), 337–357 (IYIPFVNWMLYVAVVIVIVSF), 363–383 (LAAAYGIAVTGTMVLTSILST), 396–416 (FVALILIAFLCVDIPLFTANL), and 419–439 (LLSGGWLPLSLGTVMFIVMTT).

This sequence belongs to the HAK/KUP transporter (TC 2.A.72) family.

The protein resides in the cell inner membrane. It carries out the reaction K(+)(in) + H(+)(in) = K(+)(out) + H(+)(out). Functionally, responsible for the low-affinity transport of potassium into the cell. Likely operates as a K(+):H(+) symporter. In Shigella flexneri, this protein is Low affinity potassium transport system protein Kup.